Here is a 317-residue protein sequence, read N- to C-terminus: Universal stress protein MT2052 (317 aa).

Residues Gly-13, 128-134 (GYRGQGA), 142-143 (SV), Gly-175, Asp-208, 277-283 (GSHGRGG), and 291-293 (SVS) each bind ATP.

It belongs to the universal stress protein A family.

This is Universal stress protein MT2052 from Mycobacterium tuberculosis (strain CDC 1551 / Oshkosh).